The primary structure comprises 273 residues: MTDSTIRIAIVGAGGRMGRQLIQAVTQMEGVVLGAAIERKGSTLVGSDAGELAGVGLLNVIVGDDLSQLTDNFDVLIDFTRPEGTLEHLAICRQHRKAMVIGTTGFDEAGKAAISEAAADIGIVFAANFSVGVNVVLKLLEKAAKVMGDYTDIEIIEAHHRHKVDAPSGTALAMGEAIADAMGRSLKDCAVYSREGYTGERKPGTIGFATVRAGDIVGEHTAMFADIGERVEITHKATSRMTFAHGAVKSTIWLGKHDNGLFDMRDVLNLNEL.

NAD(+) is bound by residues 12 to 17 (GAGGRM) and glutamate 38. Residue arginine 39 coordinates NADP(+). NAD(+) contacts are provided by residues 102–104 (GTT) and 126–129 (AANF). The active-site Proton donor/acceptor is histidine 159. Residue histidine 160 participates in (S)-2,3,4,5-tetrahydrodipicolinate binding. Lysine 163 (proton donor) is an active-site residue. A (S)-2,3,4,5-tetrahydrodipicolinate-binding site is contributed by 169 to 170 (GT).

The protein belongs to the DapB family. As to quaternary structure, homotetramer.

The protein resides in the cytoplasm. It carries out the reaction (S)-2,3,4,5-tetrahydrodipicolinate + NAD(+) + H2O = (2S,4S)-4-hydroxy-2,3,4,5-tetrahydrodipicolinate + NADH + H(+). It catalyses the reaction (S)-2,3,4,5-tetrahydrodipicolinate + NADP(+) + H2O = (2S,4S)-4-hydroxy-2,3,4,5-tetrahydrodipicolinate + NADPH + H(+). The protein operates within amino-acid biosynthesis; L-lysine biosynthesis via DAP pathway; (S)-tetrahydrodipicolinate from L-aspartate: step 4/4. Its function is as follows. Catalyzes the conversion of 4-hydroxy-tetrahydrodipicolinate (HTPA) to tetrahydrodipicolinate. The sequence is that of 4-hydroxy-tetrahydrodipicolinate reductase from Yersinia pseudotuberculosis serotype O:1b (strain IP 31758).